Here is a 52-residue protein sequence, read N- to C-terminus: uncharacterized protein (52 aa).

This is an uncharacterized protein from Saccharomyces cerevisiae (strain ATCC 204508 / S288c) (Baker's yeast).